Consider the following 710-residue polypeptide: Amyloid beta precursor protein binding family B member 1 (710 aa).

Position 135 is a phosphoserine (S135). Disordered regions lie at residues E143–P256 and G276–L300. Residues G145 to L173 show a composition bias toward acidic residues. The residue at position 204 (K204) is an N6-acetyllysine. Positions S223–Y234 are enriched in polar residues. One can recognise a WW domain in the interval S253–R285. The span at S287–Q299 shows a compositional bias: low complexity. One can recognise a PID 1 domain in the interval F370–A509. The residue at position 459 (S459) is a Phosphoserine; by PKC. S517 is subject to Phosphoserine. One can recognise a PID 2 domain in the interval K542–S699. Y547 is modified (phosphotyrosine; by ABL1). S610 carries the post-translational modification Phosphoserine; by SGK1. K701 bears the N6-acetyllysine mark.

In terms of assembly, component of a complex, at least composed of APBB1, RASD1/DEXRAS1 and APP. Interacts (via PID domain 2) with APP (with the intracellular domain of the amyloid-beta precursor protein). Interacts (via PID domain 2) with RASD1/DEXRAS1; impairs the transcription activation activity. Interacts (via PID domain 1) with KAT5/TIP60. Interacts (via the WW domain) with the proline-rich region of APBB1IP. Interacts with TSHZ1 and TSHZ2. Interacts (via the WW domain) with histone H2AX (when phosphorylated on 'Tyr-142') and the proline-rich region of ENAH. Interacts with MAPK8. Interacts (via PID domain 1) with TSHZ3 (via homeobox domain). Interacts with SET. Found in a trimeric complex with HDAC1 and TSHZ3; the interaction between HDAC1 and APBB1 is mediated by TSHZ3. Interacts (via WWW domain) with NEK6. Interacts (via WWW domain) with ABL1. Interacts with RNF157. Interacts with ARF6. Polyubiquitination by RNF157 leads to degradation by the proteasome. Post-translationally, phosphorylation at Ser-610 by SGK1 promotes its localization to the nucleus. Phosphorylated following nuclear translocation. Phosphorylation at Tyr-546 by ABL1 enhances transcriptional activation activity and reduces the affinity for RASD1/DEXRAS1. In terms of processing, acetylation at Lys-204 and Lys-701 by KAT5 promotes its transcription activator activity. Phosphorylated at Ser-459 by PKC upon insulin activation. Expressed in the brain, retinal lens and muscle cells (at protein level).

It is found in the cell membrane. Its subcellular location is the cytoplasm. The protein localises to the nucleus. The protein resides in the cell projection. It localises to the growth cone. It is found in the nucleus speckle. In terms of biological role, transcription coregulator that can have both coactivator and corepressor functions. Adapter protein that forms a transcriptionally active complex with the gamma-secretase-derived amyloid precursor protein (APP) intracellular domain. Plays a central role in the response to DNA damage by translocating to the nucleus and inducing apoptosis. May act by specifically recognizing and binding histone H2AX phosphorylated on 'Tyr-142' (H2AXY142ph) at double-strand breaks (DSBs), recruiting other pro-apoptosis factors such as MAPK8/JNK1. Required for histone H4 acetylation at double-strand breaks (DSBs). Its ability to specifically bind modified histones and chromatin modifying enzymes such as KAT5/TIP60, probably explains its transcription activation activity. Functions in association with TSHZ3, SET and HDAC factors as a transcriptional repressor, that inhibits the expression of CASP4. Associates with chromatin in a region surrounding the CASP4 transcriptional start site(s). Involved in hippocampal neurite branching and neuromuscular junction formation, as a result plays a role in spatial memory functioning. Plays a role in the maintenance of lens transparency. May play a role in muscle cell strength. Acts as a molecular adapter that functions in neurite outgrowth by activating the RAC1-ARF6 axis upon insulin treatment. This chain is Amyloid beta precursor protein binding family B member 1, found in Mus musculus (Mouse).